A 253-amino-acid chain; its full sequence is Bridging integrator 3 (253 aa).

A BAR domain is found at 9–232 (GQPKKQIVPK…LDQPGHSDEQ (224 aa)). 3 coiled-coil regions span residues 18–51 (KTVERDFEREYGKLQQLEEQTRRLQKDMKKSTDA), 120–152 (SLNMAVKRREQALQDYRRLQAKVEKYEEKEKTG), and 231–247 (EQRERENEAKLSELRAL). The interval 220-240 (SHQLDQPGHSDEQRERENEAK) is disordered. Over residues 227–240 (GHSDEQRERENEAK) the composition is skewed to basic and acidic residues.

In terms of tissue distribution, ubiquitously expressed except in brain.

The protein resides in the cytoplasm. Its subcellular location is the cytoskeleton. In terms of biological role, involved in cytokinesis and septation where it has a role in the localization of F-actin. In Homo sapiens (Human), this protein is Bridging integrator 3 (BIN3).